The following is a 346-amino-acid chain: MIESDRIITASPFSSQEEVIERALRPVQLDDYVGQEKIREQLKIFIEAARLRQEALDHVLLFGPPGLGKTTLAHIIAREMGVNLRQTSGPVLERAGDLAALLTNLETNDVLFIDEIHRLSPVVEEILYPAMEDYQLDIMIGEGAAARSVKIDLPSFTLVGATTRAGMLTNPLRDRFGIVSRLEFYTADELGKIVTRSAGLLNVDVTADGAREIACRSRGTPRIANRLLRRVRDFAEVRANGRIDRPVADAALQMLDVDATGLDVLDRKLLLAVLEKFGGGPVGVDNLAAAINEERDTIEEVLEPYLIQQGFLQRTPRGRMATTMAYQHFDIIPSHQTTVPSLFDPD.

Residues 4–185 (SDRIITASPF…FGIVSRLEFY (182 aa)) are large ATPase domain (RuvB-L). ATP contacts are provided by residues Leu-24, Arg-25, Gly-66, Lys-69, Thr-70, Thr-71, 132 to 134 (EDY), Arg-175, Tyr-185, and Arg-222. Thr-70 serves as a coordination point for Mg(2+). Positions 186–256 (TADELGKIVT…VADAALQMLD (71 aa)) are small ATPAse domain (RuvB-S). The tract at residues 259–346 (ATGLDVLDRK…TTVPSLFDPD (88 aa)) is head domain (RuvB-H). DNA-binding residues include Arg-295, Arg-314, and Arg-319.

This sequence belongs to the RuvB family. In terms of assembly, homohexamer. Forms an RuvA(8)-RuvB(12)-Holliday junction (HJ) complex. HJ DNA is sandwiched between 2 RuvA tetramers; dsDNA enters through RuvA and exits via RuvB. An RuvB hexamer assembles on each DNA strand where it exits the tetramer. Each RuvB hexamer is contacted by two RuvA subunits (via domain III) on 2 adjacent RuvB subunits; this complex drives branch migration. In the full resolvosome a probable DNA-RuvA(4)-RuvB(12)-RuvC(2) complex forms which resolves the HJ.

The protein resides in the cytoplasm. The enzyme catalyses ATP + H2O = ADP + phosphate + H(+). Its function is as follows. The RuvA-RuvB-RuvC complex processes Holliday junction (HJ) DNA during genetic recombination and DNA repair, while the RuvA-RuvB complex plays an important role in the rescue of blocked DNA replication forks via replication fork reversal (RFR). RuvA specifically binds to HJ cruciform DNA, conferring on it an open structure. The RuvB hexamer acts as an ATP-dependent pump, pulling dsDNA into and through the RuvAB complex. RuvB forms 2 homohexamers on either side of HJ DNA bound by 1 or 2 RuvA tetramers; 4 subunits per hexamer contact DNA at a time. Coordinated motions by a converter formed by DNA-disengaged RuvB subunits stimulates ATP hydrolysis and nucleotide exchange. Immobilization of the converter enables RuvB to convert the ATP-contained energy into a lever motion, pulling 2 nucleotides of DNA out of the RuvA tetramer per ATP hydrolyzed, thus driving DNA branch migration. The RuvB motors rotate together with the DNA substrate, which together with the progressing nucleotide cycle form the mechanistic basis for DNA recombination by continuous HJ branch migration. Branch migration allows RuvC to scan DNA until it finds its consensus sequence, where it cleaves and resolves cruciform DNA. This Nitrosomonas europaea (strain ATCC 19718 / CIP 103999 / KCTC 2705 / NBRC 14298) protein is Holliday junction branch migration complex subunit RuvB.